A 482-amino-acid chain; its full sequence is tRNA sulfurtransferase (482 aa).

Residues Leu61–Arg165 form the THUMP domain. ATP-binding positions include Leu183–Ile184, Lys265, Gly287, and Gln296. Cys344 and Cys456 are disulfide-bonded. The Rhodanese domain maps to Phe404–Pro482. The active-site Cysteine persulfide intermediate is Cys456.

This sequence belongs to the ThiI family.

It is found in the cytoplasm. The enzyme catalyses [ThiI sulfur-carrier protein]-S-sulfanyl-L-cysteine + a uridine in tRNA + 2 reduced [2Fe-2S]-[ferredoxin] + ATP + H(+) = [ThiI sulfur-carrier protein]-L-cysteine + a 4-thiouridine in tRNA + 2 oxidized [2Fe-2S]-[ferredoxin] + AMP + diphosphate. It carries out the reaction [ThiS sulfur-carrier protein]-C-terminal Gly-Gly-AMP + S-sulfanyl-L-cysteinyl-[cysteine desulfurase] + AH2 = [ThiS sulfur-carrier protein]-C-terminal-Gly-aminoethanethioate + L-cysteinyl-[cysteine desulfurase] + A + AMP + 2 H(+). Its pathway is cofactor biosynthesis; thiamine diphosphate biosynthesis. In terms of biological role, catalyzes the ATP-dependent transfer of a sulfur to tRNA to produce 4-thiouridine in position 8 of tRNAs, which functions as a near-UV photosensor. Also catalyzes the transfer of sulfur to the sulfur carrier protein ThiS, forming ThiS-thiocarboxylate. This is a step in the synthesis of thiazole, in the thiamine biosynthesis pathway. The sulfur is donated as persulfide by IscS. This is tRNA sulfurtransferase from Citrobacter koseri (strain ATCC BAA-895 / CDC 4225-83 / SGSC4696).